A 322-amino-acid polypeptide reads, in one-letter code: MAPRIPSIPSSTDLSGQSALVTGSNTGIGFENARQFLQLKASPVYLAVRSVERGQEAKKLLLDDPEVKKKNPGAVVEIYQVDMASFDSVAAFAQKFSEVKKLNIAVLNAGVSFFKYIPTSDGYETVLQVNYLSNALLATHLLPLLKAGAAASGKPSHLAFVSSNMQHMTSLKKNTIKPNENIIDWFNNRANFGMDRYNVSKLLLTGFTNELASKIDSSQVVINSMCPGLVATNFDTNSPWYLKYLMKGVRSLMARTPSEGARALTLAAITGTEGNGKYYSDGKETPSAALLLTEDGKAFQKKLWDQTLERIQQLDPTSPPPI.

NAD(+)-binding positions include 47-48 (AV), 104-106 (IAV), 197-201 (YNVSK), and 230-232 (VAT). Residue Tyr197 is the Proton acceptor of the active site.

It belongs to the short-chain dehydrogenases/reductases (SDR) family.

It participates in secondary metabolite biosynthesis; terpenoid biosynthesis. In terms of biological role, short chain dehydrogenase; part of the gene cluster that mediates the biosynthesis of sesquiterpenyl epoxy-cyclohexenoids (SECs) such as anthrobotrisins and arthrosporols, metabolites that possess a novel hybrid carbon skeleton consisting of a polyketide-derived epoxycyclohexenol combined with a terpenoid-derived monocyclic sesquiterpenol substructure (PKS-PTS hybrid). The SEC pathway plays an important role for fungal soil colonization via decreasing fungal nematode-capturing ability. Within the pathway, the cytochrome P450 monooxygenase AOL_s00215g274 is involved in specific regional ketone reductions at C-4 of farnesyl epoxy-quinone. The pathway begins with the biosynthesis of 6-methylsalicylic acid (6-MSA), the first precursor of the polyketide-derived epoxycyclohexenol in arthrosporols, by the polyketide synthase (PKS) AOL_s00215g283 via condensation of 1 acetate and 3 malonate units. The 6-methylsalicylic acid decarboxylase AOL_s00215g281 then catalyzes the decarboxylation of 6-methylsalicylic acid to yield m-cresol. The cytochrome P450 monooxygenase AOL_s00215g282 further oxidizes m-cresol to yield toluquinol. With the assistance of the oxidoreductase AOL_s00215g277, the polyprenyl transferase AOL_s00215g276 catalyzes the farnesylation of toluquinol to produce farnesyl hydroquinone, the hybrid precursor for biosynthesis of SECs. Farnesyl hydroquinone undergoes epoxidation and then subsequent dehydrogenation to form farnesyl epoxy-quinone, the first and simplest SEC. The cytochrome P450 monooxygenase AOL_s00215g278 and the FAD-dependent monooxygenase AOL_s00215g279 might be involved in the oxygenation of the phenol moiety, most likely in the epoxy formation. The cytochrome P450 monooxygenases AOL_s00215g274 and AOL_s00215g280 are involved in specific regional ketone reductions at respectively C-4 and C-1 of farnesyl epoxy-quinone PubMed:33823587. This is Short chain dehydrogenase AOL_s00215g274 from Arthrobotrys oligospora (strain ATCC 24927 / CBS 115.81 / DSM 1491) (Nematode-trapping fungus).